The following is an 893-amino-acid chain: MATEEFIIRIPPYHYIHVLDQNSNVSHVEVGPKTYIRQDNERVLFAPMRMVTVPPRHYCTVANPVSRDAQGLVLFDVTGQVRLRHADLEIRLAQDPFPLYPGEVLEKDITPLQVVLPNTALHLKALLDFEDKDGDKVVAGDEWLLEGPGTYIPRKEVEVVEIIQATIIRQNQALRLRARKECWDRDGKERVTGEEWLVTTVGAYLPAVFEEVLDLVDAVILTEKTALHLRARRNFRDFRGVSRRTGEEWLVTVQDTEAHVPDVHEEVLGVVPITTLGPHNYCVILDPVGPDGKNQLGQKRVVKGEKSFFLQPGEQLEQGIQDVYVLSEQQGLLLRALQPLEDGEDEEKVSHQAGDRWLIRGPLEYVPSAKVEVVEERQAIPLDENEGIYVQDVKTGKVRAVIGSTYMLTQDEVLWEKELPPGVEELLNKGQDPLADRGEKDTAKSLQPLAPRNKTRVVSYRVPHNAAVQVYDYREKRARVVFGPELVSLGPEEQFTVLSLSAGRPKRPHARRALCLLLGPDFFTDVITIETADHARLQLQLAYNWHFQVNDRKDPQETAKLFSVPDFVGDACKAIASRVRGAVASVTFDDFHKNSARIIRAAVFGFETSEAKDPDGMALPRPRDQAVFPQNGLVVSSVDVQSVEPVDQRTRDALQRSVQLAIEITTNSQEAAAKHEAQRLEQEARGRLERQKILDQSEAEKARKELLELEALSMAVESTGTAKAEAESRAEAARIEGEGSVLQAKLKAQALAIETEAELQRVQKVRELELVYARAQLELGVSKAQQLAEVEVKKFKQMTEAIGPSTIRDLAVAGPEMQVKLLQSLGLKSTLITDGSTPINLFNTAFGLLGMGPEGQPLGRRVASGPSPGEGISPQSAQAPQAPGDNHVVPVLR.

Residue alanine 2 is modified to N-acetylalanine. MVP repeat units lie at residues 2-56, 57-111, 112-164, 165-217, 218-272, 273-323, 324-379, 380-457, and 458-520; these read ATEE…VPPR, HYCT…DITP, LQVV…EIIQ, ATII…DLVD, AVIL…GVVP, ITTL…IQDV, YVLS…ERQA, IPLD…KTRV, and VSYR…LLGP. Lysine 444 participates in a covalent cross-link: Glycyl lysine isopeptide (Lys-Gly) (interchain with G-Cter in SUMO2). A Phosphoserine modification is found at serine 445. Lysine 704 participates in a covalent cross-link: Glycyl lysine isopeptide (Lys-Gly) (interchain with G-Cter in SUMO2). Positions 856–893 are disordered; sequence QPLGRRVASGPSPGEGISPQSAQAPQAPGDNHVVPVLR.

The vault ribonucleoprotein particle is a huge (400 A x 670 A) cage structure of 12.9 MDa. It consists of a dimer of half-vaults, with each half-vault comprising 39 identical major vault protein (MVP) chains, PARP4 and one or more vault RNAs (vRNAs). Interacts with TEP1. Interacts with PTEN and activated MAPK1. The phosphorylated protein interacts with the SH2 domains of PTPN11 and SRC. Interacts with APEX1. May interact with ZNF540. In terms of processing, phosphorylated on Tyr residues after EGF stimulation. Post-translationally, dephosphorylated by PTPN11.

The protein resides in the cytoplasm. It is found in the nucleus. In terms of biological role, required for normal vault structure. Vaults are multi-subunit structures that may act as scaffolds for proteins involved in signal transduction. Vaults may also play a role in nucleo-cytoplasmic transport. Down-regulates IFNG-mediated STAT1 signaling and subsequent activation of JAK. Down-regulates SRC activity and signaling through MAP kinases. The protein is Major vault protein (MVP) of Pongo abelii (Sumatran orangutan).